The chain runs to 160 residues: Crossover junction endodeoxyribonuclease RuvC (160 aa).

Residues Asp7, Glu70, and Asp142 contribute to the active site. The Mg(2+) site is built by Asp7, Glu70, and Asp142.

Belongs to the RuvC family. In terms of assembly, homodimer which binds Holliday junction (HJ) DNA. The HJ becomes 2-fold symmetrical on binding to RuvC with unstacked arms; it has a different conformation from HJ DNA in complex with RuvA. In the full resolvosome a probable DNA-RuvA(4)-RuvB(12)-RuvC(2) complex forms which resolves the HJ. It depends on Mg(2+) as a cofactor.

The protein localises to the cytoplasm. The enzyme catalyses Endonucleolytic cleavage at a junction such as a reciprocal single-stranded crossover between two homologous DNA duplexes (Holliday junction).. Its function is as follows. The RuvA-RuvB-RuvC complex processes Holliday junction (HJ) DNA during genetic recombination and DNA repair. Endonuclease that resolves HJ intermediates. Cleaves cruciform DNA by making single-stranded nicks across the HJ at symmetrical positions within the homologous arms, yielding a 5'-phosphate and a 3'-hydroxyl group; requires a central core of homology in the junction. The consensus cleavage sequence is 5'-(A/T)TT(C/G)-3'. Cleavage occurs on the 3'-side of the TT dinucleotide at the point of strand exchange. HJ branch migration catalyzed by RuvA-RuvB allows RuvC to scan DNA until it finds its consensus sequence, where it cleaves and resolves the cruciform DNA. This Ehrlichia ruminantium (strain Welgevonden) protein is Crossover junction endodeoxyribonuclease RuvC.